A 402-amino-acid polypeptide reads, in one-letter code: Deoxyguanosinetriphosphate triphosphohydrolase-like protein (402 aa).

Residues 20 to 39 are disordered; that stretch reads PAFSRGRLVPEPESPTRTPF. Residues 73 to 217 enclose the HD domain; sequence RLTHTIEVAQ…AAIADDIAYN (145 aa).

The protein belongs to the dGTPase family. Type 2 subfamily.

The chain is Deoxyguanosinetriphosphate triphosphohydrolase-like protein from Brucella canis (strain ATCC 23365 / NCTC 10854 / RM-666).